The following is a 660-amino-acid chain: Alpha-1,2-mannosyltransferase MNN21 (660 aa).

At 1–17 (MFQQLTYRLRLFRRRHK) the chain is on the cytoplasmic side. A helical transmembrane segment spans residues 18-38 (YIFINSIFLSVIIIFLIYSYW). Residues 39–660 (SNLPAEDNSA…FLESTQNITD (622 aa)) are Extracellular-facing. Positions 75–125 (PFEEKKPQVNPNNNQEVGVESGASEISQHKQQQQQQQHAKEPTTKTSSKSL) are disordered. The N-linked (GlcNAc...) asparagine glycan is linked to Asn-657.

The protein belongs to the MNN1/MNT family.

It localises to the golgi apparatus membrane. It participates in protein modification; protein glycosylation. Alpha-1,2-mannosyltransferase required for cell wall integrity. Responsible for addition of the first alpha-1,2-linked mannose to form the branches on the mannan backbone of oligosaccharides. Addition of alpha-1,2-mannose is required for stabilization of the alpha-1,6-mannose backbone and hence regulates mannan fibril length; and is important for both immune recognition and virulence. In Candida albicans (strain SC5314 / ATCC MYA-2876) (Yeast), this protein is Alpha-1,2-mannosyltransferase MNN21 (MNN21).